The chain runs to 290 residues: Ras-like protein 1 (290 aa).

11-18 (GGGGVGKS) lines the GTP pocket. Residues 33 to 41 (YDPTIEDSY) carry the Effector region motif. Residues 58–62 (DTAGQ) and 117–120 (NKCD) each bind GTP. Residues 176-290 (EKQQQQQQQQ…KSKNGCCVIV (115 aa)) are disordered. Composition is skewed to low complexity over residues 178–216 (QQQQ…NNNN) and 246–283 (PNQS…SKSK). Cysteine 286 is lipidated: S-palmitoyl cysteine. Cysteine 287 bears the Cysteine methyl ester mark. The S-farnesyl cysteine moiety is linked to residue cysteine 287. Positions 288–290 (VIV) are cleaved as a propeptide — removed in mature form.

The protein belongs to the small GTPase superfamily. Ras family.

The protein resides in the cell membrane. With respect to regulation, alternates between an inactive form bound to GDP and an active form bound to GTP. Activated by a guanine nucleotide-exchange factor (GEF) and inactivated by a GTPase-activating protein (GAP). Required for the regulation of both a MAP kinase signaling pathway and a cAMP signaling pathway. The activation of these pathways contributes to the pathogenicity of the cells through the induction of the morphological transition from the yeast to the polarized filamentous form. This chain is Ras-like protein 1 (RAS1), found in Candida albicans (strain SC5314 / ATCC MYA-2876) (Yeast).